The following is a 500-amino-acid chain: tRNA modification GTPase MnmE (500 aa).

(6S)-5-formyl-5,6,7,8-tetrahydrofolate contacts are provided by Arg24, Glu120, and Lys159. The region spanning 256–420 (GIPVAIIGET…LEKKLVQAAA (165 aa)) is the TrmE-type G domain. Asn266 is a K(+) binding site. GTP-binding positions include 266–271 (NAGKST), 285–291 (SDIHGTT), and 310–313 (DTAG). Mg(2+) is bound at residue Ser270. K(+) is bound by residues Ser285, Ile287, and Thr290. Thr291 provides a ligand contact to Mg(2+). A (6S)-5-formyl-5,6,7,8-tetrahydrofolate-binding site is contributed by Lys500.

The protein belongs to the TRAFAC class TrmE-Era-EngA-EngB-Septin-like GTPase superfamily. TrmE GTPase family. Homodimer. Heterotetramer of two MnmE and two MnmG subunits. K(+) serves as cofactor.

The protein resides in the cytoplasm. Its function is as follows. Exhibits a very high intrinsic GTPase hydrolysis rate. Involved in the addition of a carboxymethylaminomethyl (cmnm) group at the wobble position (U34) of certain tRNAs, forming tRNA-cmnm(5)s(2)U34. This Phocaeicola vulgatus (strain ATCC 8482 / DSM 1447 / JCM 5826 / CCUG 4940 / NBRC 14291 / NCTC 11154) (Bacteroides vulgatus) protein is tRNA modification GTPase MnmE.